The primary structure comprises 107 residues: UPF0102 protein CTN_0433 (107 aa).

It belongs to the UPF0102 family.

The chain is UPF0102 protein CTN_0433 from Thermotoga neapolitana (strain ATCC 49049 / DSM 4359 / NBRC 107923 / NS-E).